A 548-amino-acid chain; its full sequence is Esterase-5A (548 aa).

The N-terminal stretch at 1-21 (MHLVRWLICLIQLWVQLGAAG) is a signal peptide. A disulfide bridge connects residues Cys-87 and Cys-106. N-linked (GlcNAc...) asparagine glycosylation is found at Asn-95 and Asn-116. Ser-210 (acyl-ester intermediate) is an active-site residue. Cys-262 and Cys-274 are disulfide-bonded. A glycan (N-linked (GlcNAc...) asparagine) is linked at Asn-479. Cysteines 518 and 539 form a disulfide.

This sequence belongs to the type-B carboxylesterase/lipase family.

The protein localises to the secreted. It carries out the reaction a carboxylic ester + H2O = an alcohol + a carboxylate + H(+). The chain is Esterase-5A (Est-5A) from Drosophila pseudoobscura pseudoobscura (Fruit fly).